A 410-amino-acid polypeptide reads, in one-letter code: Ribose 1,5-bisphosphate phosphokinase PhnN (410 aa).

The interval 1-220 (MRYAVYLAPP…VWLLMAGSTS (220 aa)) is unknown. Residues 221 to 410 (MRTETGQLIY…SHCHQPITAL (190 aa)) are ribose 1,5-bisphosphokinase. An ATP-binding site is contributed by 233-240 (GPSGAGKD).

In the C-terminal section; belongs to the ribose 1,5-bisphosphokinase family.

It catalyses the reaction alpha-D-ribose 1,5-bisphosphate + ATP = 5-phospho-alpha-D-ribose 1-diphosphate + ADP. It functions in the pathway metabolic intermediate biosynthesis; 5-phospho-alpha-D-ribose 1-diphosphate biosynthesis; 5-phospho-alpha-D-ribose 1-diphosphate from D-ribose 5-phosphate (route II): step 3/3. Functionally, catalyzes the phosphorylation of ribose 1,5-bisphosphate to 5-phospho-D-ribosyl alpha-1-diphosphate (PRPP). The polypeptide is Ribose 1,5-bisphosphate phosphokinase PhnN (phnN) (Laribacter hongkongensis (strain HLHK9)).